A 452-amino-acid polypeptide reads, in one-letter code: MSTKSQVTRRVRTSIATPEDGVHGNNQHKGILDPHLSVLEMLDRQDGDGAGQVEEGAVMTVGKRRVERSLHHSISESWQAIKRSDYSFLSGTHEVGAMHSSVGILSSSDTSEEEAEMRPSAHGTVHLGSSLASPMRQLLVEEDNSCAEEDDCQTVTISMPSSSTSLVMPKLSLSQRLGEPQLLLVGQPARKFWLTIPKCYQKLFDVKNLGMVTRWDVGQRYLAVMVVFHDIAQAPELLDGLCEKAPCPTVIPVCQKGQKSTLAALLKRYTARKCIRVYCSPIIMSNHHEKHRLLKHLHNLCNESESGYETELTVKSKKQHRRPRKKDAGPVALRHWAIWTASFTIGIGIGCCISLMATTRFTFFSSAPLPLTAVIPAQIPSSVASDKPPHRLVPHFYMLCKTTIRQLGTSLRLFFFEKFESRTWVHIFGMDLHSDDPLASLGRLMPLDFIML.

Residues 1–28 (MSTKSQVTRRVRTSIATPEDGVHGNNQH) form a disordered region. The chain crosses the membrane as a helical span at residues 336-356 (WAIWTASFTIGIGIGCCISLM).

The protein belongs to the ATG32 family.

The protein resides in the mitochondrion outer membrane. Its subcellular location is the vacuole membrane. The protein localises to the preautophagosomal structure membrane. In terms of biological role, mitophagy-specific receptor that recruits the autophagic machinery to mitochondria and regulates selective degradation of mitochondria. Mitophagy contributes to regulate mitochondrial quantity and quality by eliminating the mitochondria to a basal level to fulfill cellular energy requirements and preventing excess ROS production. Recruits ATG11 to the surface of mitochondria. Also promotes autophagy-dependent peroxisome degradation. In Eremothecium gossypii (strain ATCC 10895 / CBS 109.51 / FGSC 9923 / NRRL Y-1056) (Yeast), this protein is Autophagy-related protein 32 (ATG32).